The sequence spans 292 residues: GTP cyclohydrolase FolE2 (292 aa).

Belongs to the GTP cyclohydrolase IV family.

It carries out the reaction GTP + H2O = 7,8-dihydroneopterin 3'-triphosphate + formate + H(+). It participates in cofactor biosynthesis; 7,8-dihydroneopterin triphosphate biosynthesis; 7,8-dihydroneopterin triphosphate from GTP: step 1/1. Functionally, converts GTP to 7,8-dihydroneopterin triphosphate. The sequence is that of GTP cyclohydrolase FolE2 from Staphylococcus aureus (strain Newman).